Here is a 171-residue protein sequence, read N- to C-terminus: MDYFTLFGLPARYQIDTQALSLRFQDLQRQYHPDKFANGTQAQQLAAVQQSATINQAWQTLRHPLTRAEYLLSLHGFDLASEQHTVRDTAFLMEQLTLCEELDDIEQSKDDVRLESFIKRVQKMFDARLQQMVEQLDNAAWDAAADTVRKLRFLDKLRSSAEQLEEKLLDF.

The J domain occupies 2-74; it reads DYFTLFGLPA…LTRAEYLLSL (73 aa).

It belongs to the HscB family. Interacts with HscA and stimulates its ATPase activity. Interacts with IscU.

Co-chaperone involved in the maturation of iron-sulfur cluster-containing proteins. Seems to help targeting proteins to be folded toward HscA. The protein is Co-chaperone protein HscB of Salmonella choleraesuis (strain SC-B67).